Reading from the N-terminus, the 245-residue chain is 1-(5-phosphoribosyl)-5-[(5-phosphoribosylamino)methylideneamino] imidazole-4-carboxamide isomerase (245 aa).

The active-site Proton acceptor is the Asp7. Residue Asp129 is the Proton donor of the active site.

It belongs to the HisA/HisF family.

The protein resides in the cytoplasm. The enzyme catalyses 1-(5-phospho-beta-D-ribosyl)-5-[(5-phospho-beta-D-ribosylamino)methylideneamino]imidazole-4-carboxamide = 5-[(5-phospho-1-deoxy-D-ribulos-1-ylimino)methylamino]-1-(5-phospho-beta-D-ribosyl)imidazole-4-carboxamide. The protein operates within amino-acid biosynthesis; L-histidine biosynthesis; L-histidine from 5-phospho-alpha-D-ribose 1-diphosphate: step 4/9. This chain is 1-(5-phosphoribosyl)-5-[(5-phosphoribosylamino)methylideneamino] imidazole-4-carboxamide isomerase, found in Escherichia coli O6:K15:H31 (strain 536 / UPEC).